The sequence spans 408 residues: Sprouty-related, EVH1 domain-containing protein 3 (408 aa).

The 113-residue stretch at 1-113 (MVRVRAVVMA…KSLLAALAAL (113 aa)) folds into the WH1 domain. The tract at residues 118 to 226 (LTPSSSSSSS…YEDYRRSGPP (109 aa)) is disordered. The span at 120–130 (PSSSSSSSSPS) shows a compositional bias: low complexity. Positions 192-242 (LPFTGIPEPSESLAGAGSQGWGSRGYEDYRRSGPPPPPLALSTCVVRFAKT) constitute a KBD domain. Position 238 is an asymmetric dimethylarginine (Arg238). Arg246 is subject to Omega-N-methylarginine. Positions 256 to 286 (LPAPLTEAAPPAPPARPPPGPGPTPAPAKAS) are disordered. The span at 265–281 (PPAPPARPPPGPGPTPA) shows a compositional bias: pro residues. The region spanning 294 to 405 (RCVHCRALFR…CAGCGGRHEE (112 aa)) is the SPR domain.

As to quaternary structure, interacts with palmitoyltransferase ZDHHC17/HIP14; the interaction leads to palmitoylation of SPRED3. Phosphorylated on tyrosine. Post-translationally, palmitoylated by ZDHHC17/HIP14. In terms of processing, ubiquitinated. In terms of tissue distribution, brain specific.

The protein resides in the cell membrane. In terms of biological role, tyrosine kinase substrate that inhibits growth-factor-mediated activation of MAP kinase. Inhibits fibroblast growth factor (FGF)-induced retinal lens fiber differentiation, probably by inhibiting FGF-mediated phosphorylation of ERK1/2. Inhibits TGFB-induced epithelial-to-mesenchymal transition in lens epithelial cells. The chain is Sprouty-related, EVH1 domain-containing protein 3 (Spred3) from Mus musculus (Mouse).